Here is a 164-residue protein sequence, read N- to C-terminus: MTDQPNNGAVANEENGPQFSLQRIYVRDLSFEAPKSPAIFRQEWTPTVSLDLNTRQKPLEGDFYEVVLTLSVTVNNGEEVAFIVEVQQAGIFLIKGLDDAAMSHTLGAFCPNILFPYAREAIDNLVVRGSFPALMLAPVNFDALYAQELQRMQEAGETPMPTVQ.

This sequence belongs to the SecB family. As to quaternary structure, homotetramer, a dimer of dimers. One homotetramer interacts with 1 SecA dimer.

The protein resides in the cytoplasm. In terms of biological role, one of the proteins required for the normal export of preproteins out of the cell cytoplasm. It is a molecular chaperone that binds to a subset of precursor proteins, maintaining them in a translocation-competent state. It also specifically binds to its receptor SecA. The sequence is that of Protein-export protein SecB from Pseudomonas syringae pv. tomato (strain ATCC BAA-871 / DC3000).